A 283-amino-acid chain; its full sequence is Non-selective voltage-gated ion channel VDAC3 (283 aa).

N-acetylcysteine is present on Cys2. Thr4 carries the post-translational modification Phosphothreonine. N6-acetyllysine occurs at positions 12, 15, and 20. 2 beta stranded membrane passes run 26–35 (MVKIDLRTKS) and 39–47 (VEFSTSGHA). Lys53 is covalently cross-linked (Glycyl lysine isopeptide (Lys-Gly) (interchain with G-Cter in ubiquitin)). 3 consecutive transmembrane segments (beta stranded) span residues 54–64 (ASGNLETKYKI), 69–76 (LTFTQKWN), and 80–89 (TLGTEISLEN). Residue Lys90 is modified to N6-acetyllysine. A beta stranded membrane pass occupies residues 95 to 104 (LKLTLDTIFV). Residues Lys109 and Lys110 each participate in a glycyl lysine isopeptide (Lys-Gly) (interchain with G-Cter in ubiquitin) cross-link. Beta stranded transmembrane passes span 111 to 120 (SGKLKASYKR), 123 to 130 (FSIGSNVD), 137 to 145 (TIYGWAVLA), 150 to 158 (LAGYQMSFD), 163 to 175 (KLSQ…GYKA), 178 to 185 (FQLHTHVN), 189 to 198 (EFGGSIYQKV), 202 to 211 (IETSINLAWT), 218 to 227 (RFGIAAKYKL), and 231 to 238 (TSLSAKVN). The residue at position 241 (Ser241) is a Phosphoserine. Residues 242-244 (LIG) and 260-264 (SALID) contribute to the NAD(+) site. 2 consecutive transmembrane segments (beta stranded) span residues 242–251 (LIGLGYTQTL) and 254–263 (GVKLTLSALI). N6-acetyllysine; alternate is present on Lys266. Lys266 is covalently cross-linked (Glycyl lysine isopeptide (Lys-Gly) (interchain with G-Cter in ubiquitin); alternate). The beta stranded transmembrane segment at 273–282 (HKVGLGFELE) threads the bilayer.

The protein belongs to the eukaryotic mitochondrial porin family. Interacts with ARMC12 in a TBC1D21-dependent manner. Interacts with MISFA. Ubiquitinated by PRKN during mitophagy, leading to its degradation and enhancement of mitophagy. Deubiquitinated by USP30.

It is found in the mitochondrion outer membrane. Its subcellular location is the membrane. The catalysed reaction is chloride(in) = chloride(out). The enzyme catalyses K(+)(in) = K(+)(out). In terms of biological role, non-selective voltage-gated ion channel that mediates the transport of anions and cations through the mitochondrion outer membrane and plasma membrane. Forms a high-conducting channel with a stable open state and a voltage-induced closure with a mild preference for anions over cations. Involved in male fertility and sperm mitochondrial sheath formation. This is Non-selective voltage-gated ion channel VDAC3 from Sus scrofa (Pig).